We begin with the raw amino-acid sequence, 109 residues long: Phycoerythrin alpha-1 subunit (109 aa).

Residues Val-6, Ala-16, Phe-17, Pro-20, Asp-27, Ala-28, and Ala-39 each coordinate (2R,3E)-phycocyanobilin.

Belongs to the phycoerythrin family. Heterotetramer of 2 identical alpha chains and 2 identical beta chains which form 2 alpha-beta heterodimers within the heterotetramer. The two alpha-beta heterodimers are rotated to an open configuration in contrast to the closed configuration found in other cryptophyte species due to the insertion of a single amino acid, Asp-65, in a conserved region of the alpha chain. In the open form, the central chromophores are not in physical contact but are separated by a water-filled channel. In terms of processing, contains three phycocyanobilin chromophores with binding mediated by both the alpha and beta subunits.

It is found in the plastid. The protein localises to the chloroplast thylakoid membrane. In terms of biological role, light-harvesting photosynthetic tetrapyrrole chromophore-protein from the phycobiliprotein complex. This Hemiselmis virescens protein is Phycoerythrin alpha-1 subunit.